Reading from the N-terminus, the 205-residue chain is GTP cyclohydrolase-2 (205 aa).

49–53 (RLHSE) is a binding site for GTP. The Zn(2+) site is built by C54, C65, and C67. Residues Q70, 92–94 (EGR), and T114 each bind GTP. The active-site Proton acceptor is the D126. Residue R128 is the Nucleophile of the active site. T149 and K154 together coordinate GTP.

This sequence belongs to the GTP cyclohydrolase II family. Requires Zn(2+) as cofactor.

The enzyme catalyses GTP + 4 H2O = 2,5-diamino-6-hydroxy-4-(5-phosphoribosylamino)-pyrimidine + formate + 2 phosphate + 3 H(+). The protein operates within cofactor biosynthesis; riboflavin biosynthesis; 5-amino-6-(D-ribitylamino)uracil from GTP: step 1/4. In terms of biological role, catalyzes the conversion of GTP to 2,5-diamino-6-ribosylamino-4(3H)-pyrimidinone 5'-phosphate (DARP), formate and pyrophosphate. This Pseudomonas putida (strain GB-1) protein is GTP cyclohydrolase-2.